The primary structure comprises 418 residues: Gamma-glutamyl phosphate reductase (418 aa).

The protein belongs to the gamma-glutamyl phosphate reductase family.

The protein localises to the cytoplasm. It carries out the reaction L-glutamate 5-semialdehyde + phosphate + NADP(+) = L-glutamyl 5-phosphate + NADPH + H(+). Its pathway is amino-acid biosynthesis; L-proline biosynthesis; L-glutamate 5-semialdehyde from L-glutamate: step 2/2. Functionally, catalyzes the NADPH-dependent reduction of L-glutamate 5-phosphate into L-glutamate 5-semialdehyde and phosphate. The product spontaneously undergoes cyclization to form 1-pyrroline-5-carboxylate. This Desulforapulum autotrophicum (strain ATCC 43914 / DSM 3382 / VKM B-1955 / HRM2) (Desulfobacterium autotrophicum) protein is Gamma-glutamyl phosphate reductase.